The primary structure comprises 271 residues: MEAEGLGWLLVPLHQLVSWVAAGAMVFGGVVPYIPQYRDIRRTQNADGFSTHVCLVLLVANILRILFWFGRHFESPLLWQSIVMILTMLLMLKLCTEVRVANELNIKRRSFAATDSKDEELRVPPRRPYLDFDPHHFWHWSSFSDYVQCVLAFTGVAGYITYLSIDSALFVETLGFLAVLTEAMLGVPQLYRNYCHRSTEGMSLKMVLMWTSGDTFKTAYFLLNGAPLQFSVCGLLQVMVDLVILGQAYAFAHHPQKPAAHAVHPASTKAL.

A run of 3 helical transmembrane segments spans residues 7–27 (GWLL…AMVF), 49–69 (FSTH…LFWF), and 72–92 (HFES…LLML). The region spanning 14 to 80 (HQLVSWVAAG…RHFESPLLWQ (67 aa)) is the PQ-loop 1 domain. Position 110 is a phosphoserine (Ser-110). A run of 3 helical transmembrane segments spans residues 145 to 165 (DYVQ…YLSI), 168 to 188 (ALFV…LGVP), and 232 to 252 (VCGL…YAFA). In terms of domain architecture, PQ-loop 2 spans 178–233 (AVLTEAMLGVPQLYRNYCHRSTEGMSLKMVLMWTSGDTFKTAYFLLNGAPLQFSVC).

It localises to the membrane. The chain is Solute carrier family 66 member 2 (Slc66a2) from Mus musculus (Mouse).